The primary structure comprises 103 residues: Sperm-associated antigen 11A (103 aa).

The signal sequence occupies residues 1–24 (MRQRLLPSVTSLLLVALLFPGSSQ). A glycan (N-linked (GlcNAc...) asparagine) is linked at Asn-29.

The protein belongs to the SPAG11 family.

The protein resides in the secreted. Functionally, has antimicrobial activity against E.coli. Plays a role in the defense response in the male reproductive tract, contributing to sperm maturation, storage and protection. The sequence is that of Sperm-associated antigen 11A from Pan troglodytes (Chimpanzee).